Reading from the N-terminus, the 390-residue chain is Putative glutamate--cysteine ligase 2 (390 aa).

It belongs to the glutamate--cysteine ligase type 2 family. YbdK subfamily.

The enzyme catalyses L-cysteine + L-glutamate + ATP = gamma-L-glutamyl-L-cysteine + ADP + phosphate + H(+). In terms of biological role, ATP-dependent carboxylate-amine ligase which exhibits weak glutamate--cysteine ligase activity. This Chloroflexus aurantiacus (strain ATCC 29366 / DSM 635 / J-10-fl) protein is Putative glutamate--cysteine ligase 2.